The chain runs to 130 residues: LAETNRTPFDLAEGECQVSVGFNTEYMHSSVGFALIMLSESEYASILFMSLFSVMFCLVVYSYLWSRGSYPRYRYDNLMHLCWKTSFTYIFNIPVFLLKPFSSGLKNKDPWLYNQPYSAFKTDALIGQGV.

Residues 45 to 65 (SILFMSLFSVMFCLVVYSYLW) traverse the membrane as a helical segment.

The protein belongs to the complex I subunit 1 family.

The protein localises to the mitochondrion inner membrane. The catalysed reaction is a ubiquinone + NADH + 5 H(+)(in) = a ubiquinol + NAD(+) + 4 H(+)(out). In terms of biological role, core subunit of the mitochondrial membrane respiratory chain NADH dehydrogenase (Complex I) that is believed to belong to the minimal assembly required for catalysis. Complex I functions in the transfer of electrons from NADH to the respiratory chain. The immediate electron acceptor for the enzyme is believed to be ubiquinone. The chain is NADH-ubiquinone oxidoreductase chain 1 (ND1) from Artemia salina (Brine shrimp).